Here is a 308-residue protein sequence, read N- to C-terminus: Methionyl-tRNA formyltransferase (308 aa).

A (6S)-5,6,7,8-tetrahydrofolate-binding site is contributed by 109–112 (SLLP).

Belongs to the Fmt family.

It carries out the reaction L-methionyl-tRNA(fMet) + (6R)-10-formyltetrahydrofolate = N-formyl-L-methionyl-tRNA(fMet) + (6S)-5,6,7,8-tetrahydrofolate + H(+). Attaches a formyl group to the free amino group of methionyl-tRNA(fMet). The formyl group appears to play a dual role in the initiator identity of N-formylmethionyl-tRNA by promoting its recognition by IF2 and preventing the misappropriation of this tRNA by the elongation apparatus. This Clostridium beijerinckii (strain ATCC 51743 / NCIMB 8052) (Clostridium acetobutylicum) protein is Methionyl-tRNA formyltransferase.